A 44-amino-acid polypeptide reads, in one-letter code: Antibacterial protein 2 homolog (44 aa).

The protein belongs to the staphylococcal hemolytic protein family.

It is found in the secreted. In terms of biological role, has hemolytic activity and also inhibits the growth of gonococci. This is Antibacterial protein 2 homolog from Staphylococcus haemolyticus (strain JCSC1435).